A 188-amino-acid polypeptide reads, in one-letter code: Shikimate kinase (188 aa).

21 to 26 (GAGKTT) is an ATP binding site. T25 contributes to the Mg(2+) binding site. Substrate-binding residues include D43, R67, and G90. Residue R130 coordinates ATP. R148 is a substrate binding site.

Belongs to the shikimate kinase family. As to quaternary structure, monomer. Mg(2+) is required as a cofactor.

It is found in the cytoplasm. The catalysed reaction is shikimate + ATP = 3-phosphoshikimate + ADP + H(+). It participates in metabolic intermediate biosynthesis; chorismate biosynthesis; chorismate from D-erythrose 4-phosphate and phosphoenolpyruvate: step 5/7. Catalyzes the specific phosphorylation of the 3-hydroxyl group of shikimic acid using ATP as a cosubstrate. In Geobacillus kaustophilus (strain HTA426), this protein is Shikimate kinase.